The primary structure comprises 185 residues: Prenylated Rab acceptor protein 1 (185 aa).

The Cytoplasmic segment spans residues 1 to 78 (MAVEKDQQKD…RNVEYYQSNY (78 aa)). The tract at residues 30–54 (AGREWLERRRATIRSWGSFVDQRRF) is required for interaction with prenylated RAB3A and VAMP2. Transmembrane regions (helical) follow at residues 79–94 (VFVF…ATSP) and 95–112 (MLLV…ILYL). At 113–131 (RTLQSKFVLFGREVSPAHQ) the chain is on the cytoplasmic side. 2 helical membrane passes run 132–148 (YALA…LAGA) and 149–165 (GSAV…VIGS). The segment at 165–185 (SHAAFHQIEAVDGEELQMEPV) is required for interaction with GDI1. Residues 166–185 (HAAFHQIEAVDGEELQMEPV) lie on the Cytoplasmic side of the membrane. The interval 175–185 (VDGEELQMEPV) is required for interaction with prenylated RAB3A and VAMP2. The tract at residues 175–185 (VDGEELQMEPV) is homodimerization.

The protein belongs to the PRA1 family. Homodimer. Interacts with VAMP2 (synaptobrevin-2), prenylated Rab proteins, GDI1, NDRG1 and PCLO.

It is found in the cell membrane. It localises to the cytoplasm. Its subcellular location is the golgi apparatus. The protein resides in the cytoplasmic vesicle. The protein localises to the secretory vesicle. It is found in the synaptic vesicle. General Rab protein regulator required for vesicle formation from the Golgi complex. May control vesicle docking and fusion by mediating the action of Rab GTPases to the SNARE complexes. In addition it inhibits the removal of Rab GTPases from the membrane by GDI1. This is Prenylated Rab acceptor protein 1 (RABAC1) from Bos taurus (Bovine).